The following is a 1020-amino-acid chain: FERM domain-containing protein 4A (1020 aa).

The FERM domain maps to arginine 5–lysine 307. The interval lysine 343–threonine 405 is necessary for interaction with CYTH1. A compositionally biased stretch (low complexity) spans serine 351–serine 367. Residues serine 351 to aspartate 371 are disordered. Positions serine 367–glutamate 401 form a coiled coil. Residue serine 515 is modified to Phosphoserine. Positions aspartate 538 to arginine 665 are disordered. Positions glutamine 542–glutamine 551 are enriched in polar residues. Over residues glycine 556–glutamine 572 the composition is skewed to pro residues. The tract at residues histidine 565–histidine 920 is necessary for tight junction and adherens junction localization; Requires for interaction with PARD3. Phosphoserine is present on residues serine 590 and serine 601. Positions valine 609 to phenylalanine 624 are enriched in basic residues. Residues serine 626–serine 658 show a composition bias toward polar residues. A phosphoserine mark is found at serine 666 and serine 696. Disordered regions lie at residues glutamate 698–serine 741 and alanine 757–proline 810. Over residues arginine 773 to alanine 796 the composition is skewed to low complexity. Phosphoserine occurs at positions 785, 854, and 882. Disordered stretches follow at residues lysine 862–valine 949 and cysteine 961–glutamate 1020. A compositionally biased stretch (basic and acidic residues) spans aspartate 893–arginine 910. Positions serine 927–threonine 947 are enriched in low complexity. 3 stretches are compositionally biased toward polar residues: residues alanine 967 to isoleucine 981, threonine 994 to serine 1004, and glutamate 1011 to glutamate 1020.

As to quaternary structure, interacts (via coiled-coil domain) with CYTH1 (via coiled-coil domain). Interacts with PARD3 (via coiled-coil domain). Found in a complex with PARD3, CYTH1 and FRMD4A. Interacts with CYTH2. Interacts with CYTH3.

It localises to the cytoplasm. The protein resides in the cytoskeleton. It is found in the cell junction. Its subcellular location is the adherens junction. The protein localises to the tight junction. Functionally, scaffolding protein that regulates epithelial cell polarity by connecting ARF6 activation with the PAR3 complex. Plays a redundant role with FRMD4B in epithelial polarization. May regulate MAPT secretion by activating ARF6-signaling. The protein is FERM domain-containing protein 4A (Frmd4a) of Mus musculus (Mouse).